The sequence spans 376 residues: Salivary hyaluronidase (376 aa).

Positions Met1 to Cys16 are cleaved as a signal peptide. 2 disulfides stabilise this stretch: Cys32–Cys328 and Cys203–Cys217. 4 N-linked (GlcNAc...) asparagine glycosylation sites follow: Asn36, Asn55, Asn77, and Asn88. The active-site Proton donor is Glu118. Asn143, Asn153, Asn181, Asn214, Asn226, Asn248, Asn287, Asn321, Asn336, Asn356, and Asn371 each carry an N-linked (GlcNAc...) asparagine glycan.

It belongs to the glycosyl hydrolase 56 family. Post-translationally, glycosylated; glycosylation is critical for enzymatic activity. Female salivary gland (at protein level).

Its subcellular location is the secreted. The enzyme catalyses Random hydrolysis of (1-&gt;4)-linkages between N-acetyl-beta-D-glucosamine and D-glucuronate residues in hyaluronate.. Hydrolyzes high molecular weight hyaluronic acid to produce small oligosaccharides. Up-regulates expression of CSF2, CSF3, LIF, CXCL1, CXCL2 and CXCL8 in cultured human dermal microvascular endothelial cells. Promotes host neutrophil recruitment at the injection site. Its function is as follows. (Microbial infection) Probably promotes Leishmania major infection in the host. The protein is Salivary hyaluronidase of Lutzomyia longipalpis (Sand fly).